The following is a 226-amino-acid chain: Peroxynitrite isomerase (226 aa).

The GXWXGXG signature appears at 21-27 (GSWEGQG). Residue His191 coordinates heme b. The segment at 201–226 (SAAEGRLAPGAERPRGAGGRKQGEQS) is disordered.

It belongs to the nitrobindin family. As to quaternary structure, homodimer. The cofactor is heme b.

The catalysed reaction is peroxynitrite = nitrate. It participates in nitrogen metabolism. In terms of biological role, heme-binding protein able to scavenge peroxynitrite and to protect free L-tyrosine against peroxynitrite-mediated nitration, by acting as a peroxynitrite isomerase that converts peroxynitrite to nitrate. Therefore, this protein likely plays a role in peroxynitrite sensing and in the detoxification of reactive nitrogen and oxygen species (RNS and ROS, respectively). Is able to bind nitric oxide (NO) in vitro, but may act as a sensor of peroxynitrite levels in vivo. The protein is Peroxynitrite isomerase of Micrococcus luteus (strain ATCC 4698 / DSM 20030 / JCM 1464 / CCM 169 / CCUG 5858 / IAM 1056 / NBRC 3333 / NCIMB 9278 / NCTC 2665 / VKM Ac-2230) (Micrococcus lysodeikticus).